Reading from the N-terminus, the 252-residue chain is Endonuclease NucS (252 aa).

This sequence belongs to the NucS endonuclease family.

The protein resides in the cytoplasm. In terms of biological role, cleaves both 3' and 5' ssDNA extremities of branched DNA structures. The polypeptide is Endonuclease NucS (Thermococcus kodakarensis (strain ATCC BAA-918 / JCM 12380 / KOD1) (Pyrococcus kodakaraensis (strain KOD1))).